Consider the following 886-residue polypeptide: Leucine--tRNA ligase (886 aa).

The short motif at 51–61 (PYPSGRIHMGH) is the 'HIGH' region element. The short motif at 644-648 (KMSKS) is the 'KMSKS' region element. Lys-647 provides a ligand contact to ATP.

It belongs to the class-I aminoacyl-tRNA synthetase family.

The protein resides in the cytoplasm. The catalysed reaction is tRNA(Leu) + L-leucine + ATP = L-leucyl-tRNA(Leu) + AMP + diphosphate. This chain is Leucine--tRNA ligase, found in Bartonella tribocorum (strain CIP 105476 / IBS 506).